We begin with the raw amino-acid sequence, 603 residues long: Threonine--tRNA ligase (603 aa).

Residues 209–500 (DHRKLGNEMK…LIEHCAGELP (292 aa)) are catalytic. Cys-301, His-352, and His-477 together coordinate Zn(2+).

This sequence belongs to the class-II aminoacyl-tRNA synthetase family. In terms of assembly, homodimer. Requires Zn(2+) as cofactor.

Its subcellular location is the cytoplasm. It carries out the reaction tRNA(Thr) + L-threonine + ATP = L-threonyl-tRNA(Thr) + AMP + diphosphate + H(+). Catalyzes the attachment of threonine to tRNA(Thr) in a two-step reaction: L-threonine is first activated by ATP to form Thr-AMP and then transferred to the acceptor end of tRNA(Thr). Also edits incorrectly charged L-seryl-tRNA(Thr). This chain is Threonine--tRNA ligase, found in Campylobacter lari (strain RM2100 / D67 / ATCC BAA-1060).